The sequence spans 432 residues: Delta-aminolevulinic acid dehydratase, chloroplastic (432 aa).

The disordered stretch occupies residues 84 to 113; sequence AAPPVPAKPSAPEGTPAISPLVMPARPRRN. Catalysis depends on lysine 300, which acts as the Schiff-base intermediate with substrate. Residues arginine 310 and lysine 322 each contribute to the 5-aminolevulinate site. Residue glutamate 338 coordinates Mg(2+). Residue lysine 353 is the Schiff-base intermediate with substrate of the active site. 5-aminolevulinate is bound by residues serine 379 and tyrosine 418.

The protein belongs to the ALAD family. As to quaternary structure, homooctamer. It depends on Mg(2+) as a cofactor.

The protein localises to the plastid. It localises to the chloroplast. It catalyses the reaction 2 5-aminolevulinate = porphobilinogen + 2 H2O + H(+). It participates in porphyrin-containing compound metabolism; protoporphyrin-IX biosynthesis; coproporphyrinogen-III from 5-aminolevulinate: step 1/4. Functionally, catalyzes an early step in the biosynthesis of tetrapyrroles. Binds two molecules of 5-aminolevulinate per subunit, each at a distinct site, and catalyzes their condensation to form porphobilinogen. This is Delta-aminolevulinic acid dehydratase, chloroplastic (HEMB) from Physcomitrium patens (Spreading-leaved earth moss).